The primary structure comprises 861 residues: Translation initiation factor IF-2 (861 aa).

The segment at 107 to 272 is disordered; that stretch reads AQKQQDIQRA…QRKKKSKVVQ (166 aa). The span at 115 to 128 shows a compositional bias: basic and acidic residues; the sequence is RAAEEAAAKERETE. Polar residues-rich tracts occupy residues 148 to 158 and 169 to 180; these read SVQQEAANMDT and VDESVSATTAGG. Positions 210 to 228 are enriched in basic and acidic residues; it reads NKEDSEVRREPADAEDLKR. Residues 260-269 are compositionally biased toward basic residues; that stretch reads RARQRKKKSK. Positions 362-531 constitute a tr-type G domain; that stretch reads SRAPVVSVMG…LLQSEMLELT (170 aa). Residues 371–378 form a G1 region; it reads GHVDHGKT. Residue 371–378 participates in GTP binding; it reads GHVDHGKT. Residues 396-400 form a G2 region; the sequence is GITQH. The tract at residues 417–420 is G3; the sequence is DTPG. GTP is bound by residues 417–421 and 471–474; these read DTPGH and NKMD. Residues 471–474 form a G4 region; sequence NKMD. A G5 region spans residues 507 to 509; that stretch reads SAH.

It belongs to the TRAFAC class translation factor GTPase superfamily. Classic translation factor GTPase family. IF-2 subfamily.

Its subcellular location is the cytoplasm. In terms of biological role, one of the essential components for the initiation of protein synthesis. Protects formylmethionyl-tRNA from spontaneous hydrolysis and promotes its binding to the 30S ribosomal subunits. Also involved in the hydrolysis of GTP during the formation of the 70S ribosomal complex. The polypeptide is Translation initiation factor IF-2 (Hahella chejuensis (strain KCTC 2396)).